A 273-amino-acid polypeptide reads, in one-letter code: Large ribosomal subunit protein uL2 (273 aa).

The disordered stretch occupies residues 223–273; that stretch reads VVMNPVDHPMGGGEGRSSGGRHPCTPWGVPTKGHKTRSNKSTDKYIVKRRG. Residues 262 to 273 show a composition bias toward basic and acidic residues; that stretch reads KSTDKYIVKRRG.

This sequence belongs to the universal ribosomal protein uL2 family. Part of the 50S ribosomal subunit. Forms a bridge to the 30S subunit in the 70S ribosome.

In terms of biological role, one of the primary rRNA binding proteins. Required for association of the 30S and 50S subunits to form the 70S ribosome, for tRNA binding and peptide bond formation. It has been suggested to have peptidyltransferase activity; this is somewhat controversial. Makes several contacts with the 16S rRNA in the 70S ribosome. This is Large ribosomal subunit protein uL2 from Syntrophus aciditrophicus (strain SB).